Here is a 273-residue protein sequence, read N- to C-terminus: MSILEKITSSPSECAEHITNKDSCLSKKIQKELTSFLQKKETLGCDSESCVITHPAVKAYAQQKGLDLSKELETRFKAPGPRNNTGLLTNFNIDETLQRWAIKYTKFFNCPFSMMDFESIHYKFNQVDMAKVYKGEELQYVEGKAVKRPCNTFGCVLNTDFSTGPGKHWVAIFVDMRGDCWSIEYFNSAGNSPPGPVIRWMERVKQQLLKIHHTVKTLAVTNIRHQRSQTECGPYSLFYIRARLDNVSYTHFISTRITDENMYKFRTHLFRIA.

Catalysis depends on residues H168 and N187. Residue Q226 participates in substrate binding. Catalysis depends on C232, which acts as the Nucleophile.

This sequence belongs to the peptidase C63 family.

Its subcellular location is the host cytoplasm. The protein localises to the virion. Cysteine protease that plays several role during infection including processing of the structural polyprotein or inhibition of the host immune response. Catalyzes the maturation of the pp220 and pp62 polyprotein precursors into core-shell proteins. Plays a role in the disruption of host pyroptosis via specific cleavage of gasdermin D/GSDMD. In addition, strongly decreases the host cGAS-STING signaling by targeting IKBKE via its enzymatic activity. Also impairs host FOXJ1-mediated antiviral effect via degradation of FOXJ1. This African swine fever virus (isolate Tick/Malawi/Lil 20-1/1983) (ASFV) protein is Cysteine protease S273R.